Reading from the N-terminus, the 391-residue chain is Pyruvate dehydrogenase E1 component subunit alpha, mitochondrial (391 aa).

The N-terminal 26 residues, 1–26 (MALSTSRAINHIMKPLSAAVCATRRL), are a transit peptide targeting the mitochondrion. 10 residues coordinate pyruvate: His-92, Tyr-118, Arg-119, Gly-167, Val-169, Asp-198, Gly-199, Ala-200, Asn-227, and Tyr-229. 8 residues coordinate thiamine diphosphate: Tyr-118, Arg-119, Gly-167, Val-169, Asp-198, Gly-199, Ala-200, and Asn-227. Asp-198 is a binding site for Mg(2+). The Mg(2+) site is built by Asn-227 and Tyr-229. His-293 serves as a coordination point for thiamine diphosphate. The segment at 294–313 (SMSDPGSTYRTRDEISGVRQ) is disordered. The span at 303–313 (RTRDEISGVRQ) shows a compositional bias: basic and acidic residues.

As to quaternary structure, tetramer of 2 alpha and 2 beta subunits. It depends on thiamine diphosphate as a cofactor. Mg(2+) serves as cofactor.

The protein localises to the mitochondrion matrix. The catalysed reaction is N(6)-[(R)-lipoyl]-L-lysyl-[protein] + pyruvate + H(+) = N(6)-[(R)-S(8)-acetyldihydrolipoyl]-L-lysyl-[protein] + CO2. With respect to regulation, E1 activity is regulated by phosphorylation (inactivation) and dephosphorylation (activation) of the alpha subunit. The pyruvate dehydrogenase complex catalyzes the overall conversion of pyruvate to acetyl-CoA and CO(2). It contains multiple copies of three enzymatic components: pyruvate dehydrogenase (E1), dihydrolipoamide acetyltransferase (E2) and lipoamide dehydrogenase (E3). The sequence is that of Pyruvate dehydrogenase E1 component subunit alpha, mitochondrial from Solanum tuberosum (Potato).